A 62-amino-acid polypeptide reads, in one-letter code: Beta-defensin 33 (62 aa).

The first 20 residues, 1-20 (MRLLFLLFILLVCLAQTTSG), serve as a signal peptide directing secretion. Intrachain disulfides connect Cys-30/Cys-59, Cys-37/Cys-52, and Cys-45/Cys-60.

Belongs to the beta-defensin family.

Its subcellular location is the secreted. Its function is as follows. Has antibacterial activity. The sequence is that of Beta-defensin 33 (Defb33) from Mus musculus (Mouse).